The chain runs to 153 residues: Putative trans-acting regulator pXO2-62/BXB0076/GBAA_pXO2_0076 (153 aa).

This sequence belongs to the AtxA/AcpA family.

In Bacillus anthracis, this protein is Putative trans-acting regulator pXO2-62/BXB0076/GBAA_pXO2_0076.